Consider the following 44-residue polypeptide: uncharacterized protein (44 aa).

A helical membrane pass occupies residues 4–24 (ISSILIRGGGVLIVVILLLWI).

It is found in the membrane. This is an uncharacterized protein from Ornithodoros (relapsing fever ticks).